The sequence spans 162 residues: Putative ankyrin repeat protein R664 (162 aa).

ANK repeat units follow at residues 10 to 40, 47 to 78, and 82 to 111; these read KKLV…NVNY, NDTP…DVNY, and YHET…NPYL.

The chain is Putative ankyrin repeat protein R664 from Acanthamoeba polyphaga mimivirus (APMV).